We begin with the raw amino-acid sequence, 211 residues long: Pupal cuticle protein G1A (211 aa).

A run of 5 repeats spans residues 13–16 (AAPA), 21–24 (AAPA), 33–36 (AAPV), 111–114 (AAPV), and 179–182 (AAPV).

Its function is as follows. Component of the cuticle of the pupa of Tenebrio molitor. In Tenebrio molitor (Yellow mealworm beetle), this protein is Pupal cuticle protein G1A.